Reading from the N-terminus, the 606-residue chain is MVVINGYSFKTQQLLTQQPDHSQLTQFVQPQSQSTHSVHPGPSPGQQQAGGSMTMPSSSTGKGKREWDINDAIVPHVPDQEFDEFNEWSDGHVRHIYSLHNEEAKKHISGWAMRNTNNHNVNILKKSCLGVLVCSQHCTLPNGSKINLRPAICDKARRKQEGKACPNKSCRGGRLEIKPCRGHCGYPVTHFWRHSGNAIFFQAKGVHDHLRPDPKNSSVSKRAFGRVPLAGKSANGSVAKKSVIAGLVKQAKQQHSLISKVLKRPAVSNPLAHTALDIYQYNACGKCAGYSHCTCSYLDDSTTARSHQLSQSSNYGTNSWPLSGSESSAPCETAANVFTVNHQHITYNYPIYHATPAAATAAPSKSPSLPYACSISELAAYQQSSSGNSFAMGVPVHGHTQCQAVAYDSSPQLATPEPEFINYSQIKHLGGGGGQEEISCKAEPGPTIKYNATVETQPYVEDNYDYYYSPKAEYEMQQHHHQQQQSHQQFGGNQTAGHHYYESSSGYNGVSYFDTGTTTAPGNTATGNGLEVGYGGYYDHYTSYEQQMAVAGGFATAGGSTAPTVAAPPGHPPPPPPPPTLTYHHHHHHHLHHPAAATGLAPSVTH.

Residues 20-37 are compositionally biased toward polar residues; sequence DHSQLTQFVQPQSQSTHS. Disordered stretches follow at residues 20–65, 475–501, and 561–606; these read DHSQ…KGKR, EMQQ…HHYY, and TAPT…SVTH. The segment covering 44-61 has biased composition (low complexity); that stretch reads PGQQQAGGSMTMPSSSTG. A DNA-binding region (GCM) is located at residues 65–224; it reads REWDINDAIV…KNSSVSKRAF (160 aa). Residues 490–501 show a composition bias toward polar residues; the sequence is FGGNQTAGHHYY. Pro residues predominate over residues 569–580; that stretch reads PGHPPPPPPPPT. Residues 583–593 show a composition bias toward basic residues; sequence YHHHHHHHLHH. Positions 594–606 are enriched in low complexity; it reads PAAATGLAPSVTH.

Expressed in glial lineages within embryonic procephalic mesoderm. Expression is highest in hemocyte primordia and longitudinal and nerve root ganglia.

The protein resides in the nucleus. Its function is as follows. Transcription factor with a minor role promoting glial cell differentiation and a more significant role in hematocyte differentiation. Gcm2, together with gcm, is required for the proliferation of plasmatocyte precursors, the expression of Croquemort protein, and the ability of plasmatocytes to convert into macrophages. This chain is Transcription factor glial cells missing 2 (gcm2), found in Drosophila melanogaster (Fruit fly).